The following is a 585-amino-acid chain: Zinc finger protein 614 (585 aa).

Positions 8–79 (LTLEDVAVEF…DAKIQNKNCP (72 aa)) constitute a KRAB domain. Residues 205–227 (HACIECEQTFLRKSQLIYHENIC) form a C2H2-type 1; atypical zinc finger. The segment at 257–281 (KICIPNEYRKGSTVKSSLITHQQTH) adopts a C2H2-type 2; degenerate zinc-finger fold. 10 C2H2-type zinc fingers span residues 287 to 309 (YMCSECGKGFTMKRYLIAHQRTH), 315 to 337 (YVCKECGKGFTVKSNLIVHQRTH), 343 to 365 (YICSECGKGFTMKRYLVVHQRTH), 371 to 393 (YMCSECGKGFTVKSNLIVHQRSH), 399 to 421 (YICSECGKGFTVKRTLVIHQRTH), 427 to 449 (YICNECGKGFTTKRTLIIHQRTH), 455 to 477 (YECNECGKAFSQKICLIQHERCH), 483 to 505 (FVCTECGKSYSHKYGLITHQRIH), 511 to 533 (YECNECGKAFTTKSVLNVHQRTH), and 539 to 561 (YGCSDCEKAFSHLSNLVKHKKMH).

This sequence belongs to the krueppel C2H2-type zinc-finger protein family.

Its subcellular location is the nucleus. Functionally, may be involved in transcriptional regulation. This chain is Zinc finger protein 614 (ZNF614), found in Homo sapiens (Human).